The primary structure comprises 236 residues: Pyridoxine 5'-phosphate synthase (236 aa).

Asn-6 is a 3-amino-2-oxopropyl phosphate binding site. A 1-deoxy-D-xylulose 5-phosphate-binding site is contributed by 8–9 (DH). Position 17 (Arg-17) interacts with 3-amino-2-oxopropyl phosphate. Residue His-42 is the Proton acceptor of the active site. 1-deoxy-D-xylulose 5-phosphate-binding residues include Arg-44 and His-49. The active-site Proton acceptor is the Glu-69. Thr-99 is a 1-deoxy-D-xylulose 5-phosphate binding site. His-192 (proton donor) is an active-site residue. 3-amino-2-oxopropyl phosphate-binding positions include Gly-193 and 216 to 217 (GH).

This sequence belongs to the PNP synthase family. In terms of assembly, homooctamer; tetramer of dimers.

It is found in the cytoplasm. It catalyses the reaction 3-amino-2-oxopropyl phosphate + 1-deoxy-D-xylulose 5-phosphate = pyridoxine 5'-phosphate + phosphate + 2 H2O + H(+). It functions in the pathway cofactor biosynthesis; pyridoxine 5'-phosphate biosynthesis; pyridoxine 5'-phosphate from D-erythrose 4-phosphate: step 5/5. In terms of biological role, catalyzes the complicated ring closure reaction between the two acyclic compounds 1-deoxy-D-xylulose-5-phosphate (DXP) and 3-amino-2-oxopropyl phosphate (1-amino-acetone-3-phosphate or AAP) to form pyridoxine 5'-phosphate (PNP) and inorganic phosphate. In Aquifex pyrophilus, this protein is Pyridoxine 5'-phosphate synthase.